Consider the following 375-residue polypeptide: Alcohol dehydrogenase class-3 chain H (375 aa).

At alanine 1 the chain carries N-acetylalanine. Zn(2+) is bound by residues cysteine 46, histidine 68, cysteine 98, cysteine 101, cysteine 104, cysteine 112, and cysteine 175.

Belongs to the zinc-containing alcohol dehydrogenase family. Class-III subfamily. Homodimer or heterodimer with L chain. Zn(2+) serves as cofactor.

The protein localises to the cytoplasm. The catalysed reaction is a primary alcohol + NAD(+) = an aldehyde + NADH + H(+). It carries out the reaction a secondary alcohol + NAD(+) = a ketone + NADH + H(+). It catalyses the reaction S-(hydroxymethyl)glutathione + NADP(+) = S-formylglutathione + NADPH + H(+). The enzyme catalyses S-(hydroxymethyl)glutathione + NAD(+) = S-formylglutathione + NADH + H(+). Functionally, class-III ADH is remarkably ineffective in oxidizing ethanol, but it readily catalyzes the oxidation of long-chain primary alcohols and the oxidation of S-(hydroxymethyl) glutathione. In Gadus morhua (Atlantic cod), this protein is Alcohol dehydrogenase class-3 chain H.